A 453-amino-acid polypeptide reads, in one-letter code: Bifunctional protein GlmU (453 aa).

The pyrophosphorylase stretch occupies residues 1-231 (MERTCLAVIL…EIEMTGCNTR (231 aa)). UDP-N-acetyl-alpha-D-glucosamine contacts are provided by residues 10–13 (LAAG), Lys-24, Gln-77, 82–83 (GT), 105–107 (YGD), Gly-143, Glu-157, Asn-172, and Asn-229. Asp-107 contributes to the Mg(2+) binding site. Asn-229 serves as a coordination point for Mg(2+). A linker region spans residues 232–252 (AELAVIERFWQERRRHQMMLS). The segment at 253–453 (GVTMIAPETV…AIKAAKKAKA (201 aa)) is N-acetyltransferase. 2 residues coordinate UDP-N-acetyl-alpha-D-glucosamine: Arg-318 and Lys-336. The Proton acceptor role is filled by His-348. Positions 351 and 362 each coordinate UDP-N-acetyl-alpha-D-glucosamine. Acetyl-CoA contacts are provided by residues Ala-365, 371–372 (NY), Ser-390, Ser-408, and Arg-425.

The protein in the N-terminal section; belongs to the N-acetylglucosamine-1-phosphate uridyltransferase family. This sequence in the C-terminal section; belongs to the transferase hexapeptide repeat family. In terms of assembly, homotrimer. The cofactor is Mg(2+).

The protein resides in the cytoplasm. It carries out the reaction alpha-D-glucosamine 1-phosphate + acetyl-CoA = N-acetyl-alpha-D-glucosamine 1-phosphate + CoA + H(+). It catalyses the reaction N-acetyl-alpha-D-glucosamine 1-phosphate + UTP + H(+) = UDP-N-acetyl-alpha-D-glucosamine + diphosphate. It participates in nucleotide-sugar biosynthesis; UDP-N-acetyl-alpha-D-glucosamine biosynthesis; N-acetyl-alpha-D-glucosamine 1-phosphate from alpha-D-glucosamine 6-phosphate (route II): step 2/2. It functions in the pathway nucleotide-sugar biosynthesis; UDP-N-acetyl-alpha-D-glucosamine biosynthesis; UDP-N-acetyl-alpha-D-glucosamine from N-acetyl-alpha-D-glucosamine 1-phosphate: step 1/1. The protein operates within bacterial outer membrane biogenesis; LPS lipid A biosynthesis. In terms of biological role, catalyzes the last two sequential reactions in the de novo biosynthetic pathway for UDP-N-acetylglucosamine (UDP-GlcNAc). The C-terminal domain catalyzes the transfer of acetyl group from acetyl coenzyme A to glucosamine-1-phosphate (GlcN-1-P) to produce N-acetylglucosamine-1-phosphate (GlcNAc-1-P), which is converted into UDP-GlcNAc by the transfer of uridine 5-monophosphate (from uridine 5-triphosphate), a reaction catalyzed by the N-terminal domain. The polypeptide is Bifunctional protein GlmU (Rhizobium johnstonii (strain DSM 114642 / LMG 32736 / 3841) (Rhizobium leguminosarum bv. viciae)).